We begin with the raw amino-acid sequence, 213 residues long: Thymidylate kinase (213 aa).

10–17 (GLEGAGKT) contributes to the ATP binding site.

Belongs to the thymidylate kinase family.

It catalyses the reaction dTMP + ATP = dTDP + ADP. Its function is as follows. Phosphorylation of dTMP to form dTDP in both de novo and salvage pathways of dTTP synthesis. The protein is Thymidylate kinase of Escherichia coli O1:K1 / APEC.